The primary structure comprises 144 residues: D-aminoacyl-tRNA deacylase (144 aa).

Positions 136 to 137 (GP) match the Gly-cisPro motif, important for rejection of L-amino acids motif.

This sequence belongs to the DTD family. In terms of assembly, homodimer.

It localises to the cytoplasm. It catalyses the reaction glycyl-tRNA(Ala) + H2O = tRNA(Ala) + glycine + H(+). The catalysed reaction is a D-aminoacyl-tRNA + H2O = a tRNA + a D-alpha-amino acid + H(+). Its function is as follows. An aminoacyl-tRNA editing enzyme that deacylates mischarged D-aminoacyl-tRNAs. Also deacylates mischarged glycyl-tRNA(Ala), protecting cells against glycine mischarging by AlaRS. Acts via tRNA-based rather than protein-based catalysis; rejects L-amino acids rather than detecting D-amino acids in the active site. By recycling D-aminoacyl-tRNA to D-amino acids and free tRNA molecules, this enzyme counteracts the toxicity associated with the formation of D-aminoacyl-tRNA entities in vivo and helps enforce protein L-homochirality. The sequence is that of D-aminoacyl-tRNA deacylase from Aliivibrio salmonicida (strain LFI1238) (Vibrio salmonicida (strain LFI1238)).